We begin with the raw amino-acid sequence, 570 residues long: Urease subunit alpha (570 aa).

The region spanning 131–570 (GGMDSHIHFI…LPMAQRYFLF (440 aa)) is the Urease domain. Residues His136, His138, and Lys219 each contribute to the Ni(2+) site. Residue Lys219 is modified to N6-carboxylysine. A substrate-binding site is contributed by His221. His248 and His274 together coordinate Ni(2+). His322 (proton donor) is an active-site residue. Asp362 is a Ni(2+) binding site.

It belongs to the metallo-dependent hydrolases superfamily. Urease alpha subunit family. Heterotrimer of UreA (gamma), UreB (beta) and UreC (alpha) subunits. Three heterotrimers associate to form the active enzyme. It depends on Ni cation as a cofactor. In terms of processing, carboxylation allows a single lysine to coordinate two nickel ions.

It is found in the cytoplasm. The enzyme catalyses urea + 2 H2O + H(+) = hydrogencarbonate + 2 NH4(+). It functions in the pathway nitrogen metabolism; urea degradation; CO(2) and NH(3) from urea (urease route): step 1/1. This is Urease subunit alpha from Rhizobium etli (strain ATCC 51251 / DSM 11541 / JCM 21823 / NBRC 15573 / CFN 42).